Consider the following 73-residue polypeptide: UPF0435 protein lin1819 (73 aa).

This sequence belongs to the UPF0435 family.

The chain is UPF0435 protein lin1819 from Listeria innocua serovar 6a (strain ATCC BAA-680 / CLIP 11262).